The sequence spans 136 residues: Large ribosomal subunit protein uL16c (136 aa).

This sequence belongs to the universal ribosomal protein uL16 family. Part of the 50S ribosomal subunit.

It is found in the plastid. The protein localises to the chloroplast. The polypeptide is Large ribosomal subunit protein uL16c (Zea mays (Maize)).